The following is a 687-amino-acid chain: E3 ubiquitin-protein ligase RNF19B (687 aa).

Residues 1–294 (MRLRNDCLVR…VCGCEFCWLC (294 aa)) are required for ubiquitin ligase activity and for protection against staurosporin-induced cell death. The segment at 53 to 88 (RTRAAPEPSVPSPPPSPPPPPPPPVSVPPPPSSPGG) is disordered. The segment covering 60–85 (PSVPSPPPSPPPPPPPPVSVPPPPSS) has biased composition (pro residues). Residues 91 to 313 (SLIECPLCLV…LSPSGCTFWG (223 aa)) are TRIAD supradomain. Residues Cys95, Cys98, Cys118, Cys121, Cys182, Cys187, Cys204, Cys209, Cys214, Cys217, His222, Cys227, Cys263, and Cys266 each coordinate Zn(2+). The RING-type 1 zinc-finger motif lies at 95 to 144 (CPLCLVRQPPEEIPELLSCRHRSCLRCLRQYLRIEICESRVNLRCPECAE). The IBR-type zinc-finger motif lies at 161-227 (TRKYEEFLLR…KHVWHPNQTC (67 aa)). The RING-type 2; atypical zinc finger occupies 263 to 294 (CPRCSAYIIKMNDGSCNHMTCSVCGCEFCWLC). Cys278 is an active-site residue. Residues Cys283, Cys286, Cys291, Cys294, His302, and Cys309 each coordinate Zn(2+). Helical transmembrane passes span 330–350 (LIGA…AMVI) and 391–411 (VVAA…VYGV). A disordered region spans residues 618–662 (SIRSDLESSDAQSDDVPDLASEEYDSPHLFPPSPSNALQESPPHR). Residues 629-641 (QSDDVPDLASEEY) are compositionally biased toward acidic residues.

It belongs to the RBR family. RNF19 subfamily. In terms of assembly, interacts with UBE2L3, UBE2L6 and UCKL1.

It localises to the cytoplasmic granule membrane. The protein resides in the endoplasmic reticulum membrane. It carries out the reaction [E2 ubiquitin-conjugating enzyme]-S-ubiquitinyl-L-cysteine + [acceptor protein]-L-lysine = [E2 ubiquitin-conjugating enzyme]-L-cysteine + [acceptor protein]-N(6)-ubiquitinyl-L-lysine.. Its pathway is protein modification; protein ubiquitination. In terms of biological role, E3 ubiquitin-protein ligase which accepts ubiquitin from E2 ubiquitin-conjugating enzymes UBE2L3 and UBE2L6 in the form of a thioester and then directly transfers the ubiquitin to targeted substrates, such as UCKL1. Involved in the cytolytic activity of natural killer cells and cytotoxic T-cells. Protects against staurosporin-induced cell death. The chain is E3 ubiquitin-protein ligase RNF19B (rnf19b) from Xenopus laevis (African clawed frog).